Reading from the N-terminus, the 260-residue chain is Factor V activator RVV-V gamma (260 aa).

Residues 1-18 (MVLIKVLANLLVLQLSYA) form the signal peptide. The propeptide occupies 19 to 24 (QKSSEL). Residues 25-251 (VVGGDECNIN…YNNWIQSIIA (227 aa)) form the Peptidase S1 domain. Cystine bridges form between Cys31/Cys165, Cys52/Cys68, Cys100/Cys258, Cys144/Cys212, Cys176/Cys191, and Cys202/Cys227. Active-site charge relay system residues include His67 and Asp112. The active-site Charge relay system is Ser206. Asn253 is a glycosylation site (N-linked (GlcNAc...) asparagine).

This sequence belongs to the peptidase S1 family. Snake venom subfamily. Monomer. In terms of tissue distribution, expressed by the venom gland.

The protein resides in the secreted. The catalysed reaction is Fully activates human clotting factor V by a single cleavage at the 1545-Trp-Tyr-Leu-Arg-|-Ser-Asn-Asn-Gly-1552 bond. Cattle, but not rabbit, factor V is cleaved, and no other proteins of the clotting system are attacked. Esterase activity is observed on Bz-Arg-OEt and Tos-Arg-OMe, and amidase activity on Phe-pipecolyl-Arg-NHPhNO2.. Its function is as follows. Venom serine protease that selectively activates factor V (F5) in a calcium-independent manner. It cleaves the Arg(1545)-Ser(1546) linkage in the human factor V molecule. Induces the coagulation of mammalian plasma. This is Factor V activator RVV-V gamma from Daboia siamensis (Eastern Russel's viper).